Here is a 158-residue protein sequence, read N- to C-terminus: Mitochondrial import inner membrane translocase subunit TIM14 (158 aa).

Topologically, residues methionine 1–proline 55 are mitochondrial intermembrane. A helical transmembrane segment spans residues valine 56–isoleucine 78. Residues arginine 79–lysine 158 are Mitochondrial matrix-facing. The J domain maps to glutamate 102–lysine 158.

Belongs to the TIM14 family. Heterodimer with PAM16. Component of the PAM complex, at least composed of mtHsp70, MGE1, TIM44, PAM16, PAM17 and PAM18.

The protein resides in the mitochondrion inner membrane. Its function is as follows. Essential component of the PAM complex, a complex required for the translocation of transit peptide-containing proteins from the inner membrane into the mitochondrial matrix in an ATP-dependent manner. In the complex, it is required to stimulate activity of mtHSP70 (SSC1). This chain is Mitochondrial import inner membrane translocase subunit TIM14 (PAM18), found in Eremothecium gossypii (strain ATCC 10895 / CBS 109.51 / FGSC 9923 / NRRL Y-1056) (Yeast).